The following is a 246-amino-acid chain: Ribonuclease PH (246 aa).

Phosphate contacts are provided by residues R86 and 124–126 (GTR).

This sequence belongs to the RNase PH family. Homohexameric ring arranged as a trimer of dimers.

It carries out the reaction tRNA(n+1) + phosphate = tRNA(n) + a ribonucleoside 5'-diphosphate. Functionally, phosphorolytic 3'-5' exoribonuclease that plays an important role in tRNA 3'-end maturation. Removes nucleotide residues following the 3'-CCA terminus of tRNAs; can also add nucleotides to the ends of RNA molecules by using nucleoside diphosphates as substrates, but this may not be physiologically important. Probably plays a role in initiation of 16S rRNA degradation (leading to ribosome degradation) during starvation. This chain is Ribonuclease PH, found in Bacillus licheniformis (strain ATCC 14580 / DSM 13 / JCM 2505 / CCUG 7422 / NBRC 12200 / NCIMB 9375 / NCTC 10341 / NRRL NRS-1264 / Gibson 46).